The chain runs to 328 residues: Probable voltage-gated potassium channel subunit beta (328 aa).

Residues tryptophan 21, glutamine 27, and aspartate 49 each coordinate NADP(+). The Proton donor/acceptor role is filled by tyrosine 54. NADP(+) is bound by residues serine 152, glutamine 178, tryptophan 207, serine 208, proline 209, leucine 210, alanine 211, lysine 218, arginine 229, glycine 285, threonine 287, glutamine 291, glutamate 294, and asparagine 295.

Belongs to the shaker potassium channel beta subunit family. Forms heteromultimeric complexes with potassium channel alpha subunits. In terms of tissue distribution, expressed in late-developed leaves with the highest expression in the flag leaf (at protein level).

In terms of biological role, probable accessory potassium channel protein which modulates the activity of the pore-forming alpha subunit. This Oryza sativa subsp. japonica (Rice) protein is Probable voltage-gated potassium channel subunit beta (KOB1).